Here is a 358-residue protein sequence, read N- to C-terminus: 3-dehydroquinate synthase (358 aa).

Residues 70-75 (DGEQYK), 104-108 (GVVGD), 128-129 (TT), lysine 141, lysine 150, and 168-171 (CLNT) contribute to the NAD(+) site. Zn(2+) is bound by residues glutamate 183, histidine 246, and histidine 263.

It belongs to the sugar phosphate cyclases superfamily. Dehydroquinate synthase family. Requires Co(2+) as cofactor. It depends on Zn(2+) as a cofactor. NAD(+) is required as a cofactor.

Its subcellular location is the cytoplasm. It carries out the reaction 7-phospho-2-dehydro-3-deoxy-D-arabino-heptonate = 3-dehydroquinate + phosphate. It participates in metabolic intermediate biosynthesis; chorismate biosynthesis; chorismate from D-erythrose 4-phosphate and phosphoenolpyruvate: step 2/7. Its function is as follows. Catalyzes the conversion of 3-deoxy-D-arabino-heptulosonate 7-phosphate (DAHP) to dehydroquinate (DHQ). This Shewanella sediminis (strain HAW-EB3) protein is 3-dehydroquinate synthase.